A 539-amino-acid polypeptide reads, in one-letter code: GMP synthase [glutamine-hydrolyzing] (539 aa).

The Glutamine amidotransferase type-1 domain occupies 4–202 (KILILDFGSQ…VLQIAGAKPD (199 aa)). Cys-81 acts as the Nucleophile in catalysis. Residues His-176 and Glu-178 contribute to the active site. A GMPS ATP-PPase domain is found at 203-395 (WIMKNHIEEA…LGLPPEMVYR (193 aa)). 230-236 (SGGVDSS) lines the ATP pocket.

Homodimer.

It catalyses the reaction XMP + L-glutamine + ATP + H2O = GMP + L-glutamate + AMP + diphosphate + 2 H(+). It functions in the pathway purine metabolism; GMP biosynthesis; GMP from XMP (L-Gln route): step 1/1. Catalyzes the synthesis of GMP from XMP. This Burkholderia cenocepacia (strain ATCC BAA-245 / DSM 16553 / LMG 16656 / NCTC 13227 / J2315 / CF5610) (Burkholderia cepacia (strain J2315)) protein is GMP synthase [glutamine-hydrolyzing].